The primary structure comprises 750 residues: Small G protein signaling modulator 3 (750 aa).

Residues glycine 114–glycine 305 form the Rab-GAP TBC domain. Serine 406 bears the Phosphoserine mark. Positions glutamate 415–isoleucine 439 form a coiled coil. An SH3 domain is found at serine 480 to glutamate 539. Residues glycine 555 to glutamate 718 enclose the RUN domain.

This sequence belongs to the small G protein signaling modulator family. As to quaternary structure, interacts with GJA1. Interaction with GJA1 induces its degradation. Interacts via its RUN domain with the C-terminal region of NF2. Interacts with RAB3A, RAB4A, RAB5A, RAB8A, RAB11A, RAP1A, RAP1B, RAP2A, RAP2B and PDCD6I. No interaction with RAB27A. Widely expressed.

The protein resides in the cytoplasm. Functionally, may play a cooperative role in NF2-mediated growth suppression of cells. The protein is Small G protein signaling modulator 3 of Mus musculus (Mouse).